Reading from the N-terminus, the 636-residue chain is Chaperone protein HtpG (636 aa).

Residues 1-344 (MTMSVETQKE…SNDLSLNVSR (344 aa)) form an a; substrate-binding region. The b stretch occupies residues 345–561 (EILQKDPIID…EQDLGMQMRQ (217 aa)). Residues 562–636 (ILEASGQKVP…LNKLLVELSV (75 aa)) are c.

The protein belongs to the heat shock protein 90 family. As to quaternary structure, homodimer.

It localises to the cytoplasm. In terms of biological role, molecular chaperone. Has ATPase activity. The sequence is that of Chaperone protein HtpG from Pseudomonas fluorescens (strain SBW25).